Reading from the N-terminus, the 84-residue chain is Putative regulatory protein Dde_2720 (84 aa).

It belongs to the RemA family.

The chain is Putative regulatory protein Dde_2720 from Oleidesulfovibrio alaskensis (strain ATCC BAA-1058 / DSM 17464 / G20) (Desulfovibrio alaskensis).